Consider the following 233-residue polypeptide: DnaA regulatory inactivator Hda (233 aa).

This sequence belongs to the DnaA family. HdA subfamily. The active form seems to be an ADP-bound monomer. Forms the RIDA complex (regulatory inactivation of DnaA) of ATP-DnaA, ADP-Hda and the DNA-loaded beta sliding clamp (dnaN).

Its function is as follows. Mediates the interaction of DNA replication initiator protein DnaA with DNA polymerase subunit beta sliding clamp (dnaN). Stimulates hydrolysis of ATP-DnaA to ADP-DnaA, rendering DnaA inactive for reinitiation, a process called regulatory inhibition of DnaA or RIDA. This Shigella boydii serotype 4 (strain Sb227) protein is DnaA regulatory inactivator Hda.